A 550-amino-acid polypeptide reads, in one-letter code: Aldehyde dehydrogenase family 3 member I1, chloroplastic (550 aa).

The N-terminal 59 residues, Met1–Leu59, are a transit peptide targeting the chloroplast. NAD(+) is bound at residue Gly259–Ala264. The Proton acceptor role is filled by Glu281. Cys316 functions as the Nucleophile in the catalytic mechanism.

This sequence belongs to the aldehyde dehydrogenase family. Homodimer and homomultimer.

The protein localises to the plastid. The protein resides in the chloroplast. The catalysed reaction is an aldehyde + NAD(+) + H2O = a carboxylate + NADH + 2 H(+). With respect to regulation, thiol-based regulation. Inactivation after dimerization under oxidizing conditions. Involved in oxidative stress tolerance by detoxifying reactive aldehydes derived from lipid peroxidation. Medium- to long-chain saturated aldehydes are preferred substrates, while the short-chain aldehyde propanal is a weak substrate. Can use both NAD(+) and NADP(+), but the coenzyme preference is substrate dependent. The chain is Aldehyde dehydrogenase family 3 member I1, chloroplastic (ALDH3I1) from Arabidopsis thaliana (Mouse-ear cress).